Here is a 414-residue protein sequence, read N- to C-terminus: Succinylornithine transaminase (414 aa).

Lys-260 bears the N6-(pyridoxal phosphate)lysine mark.

Belongs to the class-III pyridoxal-phosphate-dependent aminotransferase family. AstC subfamily. It depends on pyridoxal 5'-phosphate as a cofactor.

It carries out the reaction N(2)-succinyl-L-ornithine + 2-oxoglutarate = N-succinyl-L-glutamate 5-semialdehyde + L-glutamate. It functions in the pathway amino-acid degradation; L-arginine degradation via AST pathway; L-glutamate and succinate from L-arginine: step 3/5. Functionally, catalyzes the transamination of N(2)-succinylornithine and alpha-ketoglutarate into N(2)-succinylglutamate semialdehyde and glutamate. Can also act as an acetylornithine aminotransferase. This chain is Succinylornithine transaminase, found in Yersinia pseudotuberculosis serotype I (strain IP32953).